The primary structure comprises 665 residues: UvrABC system protein B (665 aa).

The 152-residue stretch at 25 to 176 (NSIEKGNRFQ…NQRQLLRDLV (152 aa)) folds into the Helicase ATP-binding domain. Position 38 to 45 (38 to 45 (GATGTGKT)) interacts with ATP. The Beta-hairpin motif lies at 91–114 (YYDYYQPEAYIPVSDTYIEKSASI). Residues 429 to 595 (QVDDLLGEIK…PIVTRSSNAI (167 aa)) form the Helicase C-terminal domain. The region spanning 626 to 661 (PELIGQLEEQMKEAAKKLEFEEAAKYRDRIQHLRDK) is the UVR domain.

Belongs to the UvrB family. As to quaternary structure, forms a heterotetramer with UvrA during the search for lesions. Interacts with UvrC in an incision complex.

The protein resides in the cytoplasm. Functionally, the UvrABC repair system catalyzes the recognition and processing of DNA lesions. A damage recognition complex composed of 2 UvrA and 2 UvrB subunits scans DNA for abnormalities. Upon binding of the UvrA(2)B(2) complex to a putative damaged site, the DNA wraps around one UvrB monomer. DNA wrap is dependent on ATP binding by UvrB and probably causes local melting of the DNA helix, facilitating insertion of UvrB beta-hairpin between the DNA strands. Then UvrB probes one DNA strand for the presence of a lesion. If a lesion is found the UvrA subunits dissociate and the UvrB-DNA preincision complex is formed. This complex is subsequently bound by UvrC and the second UvrB is released. If no lesion is found, the DNA wraps around the other UvrB subunit that will check the other stand for damage. The chain is UvrABC system protein B from Gloeothece citriformis (strain PCC 7424) (Cyanothece sp. (strain PCC 7424)).